We begin with the raw amino-acid sequence, 336 residues long: Fructose-1,6-bisphosphatase class 1 (336 aa).

Positions 90, 112, 114, and 115 each coordinate Mg(2+). Substrate is bound by residues 115-118, Asn-211, and Lys-277; that span reads DGSS. Glu-283 contributes to the Mg(2+) binding site.

This sequence belongs to the FBPase class 1 family. Homotetramer. Requires Mg(2+) as cofactor.

Its subcellular location is the cytoplasm. The enzyme catalyses beta-D-fructose 1,6-bisphosphate + H2O = beta-D-fructose 6-phosphate + phosphate. It functions in the pathway carbohydrate biosynthesis; gluconeogenesis. This is Fructose-1,6-bisphosphatase class 1 from Pseudomonas entomophila (strain L48).